Reading from the N-terminus, the 555-residue chain is MAKKVAVIGAGVSGLTSIKCCLDEDLEPTCFERSNDIGGLWKYTETSKDGMTRIYWSLVTNVCKEMSCYSDFPFQEDYPNFMSHSKFWNYLQEFAEHFDLLKYIQFKTTVCSVTKRPDFSKTGQWDVVTETEGKQHRAVFDAVMVCTGKFLNPRLPLESFPGILKFRGQILHCQEYKIPEGFRGQRVLVIGLGNSGGDVAVELSRVAAQVLLSTRTGTWVISRSSNGGYPFNMMITRRCLNVIEQVLPSCFLRWINERQMNKRFNHENYGLSITKGKNPKFIVNDELPTCILCGTVTVKTSVKEFTETSAIFEDGTVEENIDSVIFTTGYVFSFPFLEEPLRSLCMKKMFLYKHVFPSNLERASMAIIGLISLKGSILTGTELQARWATRVFKGLCKIPPPQQLMAEVTKKEELIKRGVIKDTSEEKLSYIPYMDDLAACIGTKPNIPLLFLKDPRLAWEVFFGPCTPYQYRLMGPGKWDGARNAILTQWDRTLKPLKTRTVSSDSSKSASLSHYLKVWGAPLLLASVLLICKSSHFLKSVRDKLQNRIFPYLVL.

FAD is bound by residues 9-13 (GAGVS), glutamate 32, and 40-41 (LW). NADP(+) contacts are provided by residues 60–61 (TN) and 195–198 (SGGD). Residues 515–532 (YLKVWGAPLLLASVLLIC) traverse the membrane as a helical segment.

It belongs to the FMO family. Requires FAD as cofactor. Kidney and liver.

The protein localises to the microsome membrane. The protein resides in the endoplasmic reticulum membrane. It carries out the reaction N,N-dimethylaniline + NADPH + O2 + H(+) = N,N-dimethylaniline N-oxide + NADP(+) + H2O. Functionally, this protein is involved in the oxidative metabolism of a variety of xenobiotics such as drugs and pesticides. In Oryctolagus cuniculus (Rabbit), this protein is Dimethylaniline monooxygenase [N-oxide-forming] 4 (FMO4).